We begin with the raw amino-acid sequence, 143 residues long: Large ribosomal subunit protein uL11 (143 aa).

It belongs to the universal ribosomal protein uL11 family. In terms of assembly, part of the ribosomal stalk of the 50S ribosomal subunit. Interacts with L10 and the large rRNA to form the base of the stalk. L10 forms an elongated spine to which L12 dimers bind in a sequential fashion forming a multimeric L10(L12)X complex. One or more lysine residues are methylated.

Its function is as follows. Forms part of the ribosomal stalk which helps the ribosome interact with GTP-bound translation factors. This chain is Large ribosomal subunit protein uL11, found in Cellvibrio japonicus (strain Ueda107) (Pseudomonas fluorescens subsp. cellulosa).